The primary structure comprises 880 residues: EP-cadherin (880 aa).

Residues 1–28 (MGSTRLRNASVWLCGLLCLLQVVPSINA) form the signal peptide. The propeptide occupies 29–155 (DVSGCKPGFS…THTGLKRKKR (127 aa)). N61 carries an N-linked (GlcNAc...) asparagine glycan. Cadherin domains follow at residues 156–263 (DWVI…RPKF), 264–376 (TQDV…APIF), 377–487 (DPKT…APFF), 488–593 (VPAV…DNGP), and 594–704 (VPSP…GFDL). Topologically, residues 156 to 703 (DWVIPPIKVS…CQEKLVGGFD (548 aa)) are extracellular. 3 O-linked (GalNAc...) threonine glycosylation sites follow: T343, T382, and T400. Residue N425 is glycosylated (N-linked (GlcNAc...) asparagine). O-linked (GalNAc...) threonine glycans are attached at residues T428, T469, T471, T473, and T475. The N-linked (GlcNAc...) asparagine glycan is linked to N558. 4 O-linked (GalNAc...) threonine glycosylation sites follow: T562, T576, T578, and T580. Disulfide bonds link C603-C687 and C685-C694. An N-linked (GlcNAc...) asparagine glycan is attached at N681. The chain crosses the membrane as a helical span at residues 704 to 728 (LPIILVILGSVLALLILFLLLLLFL). Over 729–880 (KRKKVVKEPL…DMYGGDDDEE (152 aa)) the chain is Cytoplasmic. The tract at residues 790 to 826 (PAPHYRPRPSNPDEIGNFIDENLDAADNDPTAPPYDS) is disordered.

As to quaternary structure, interacts with CTNNB1.

The protein resides in the cell membrane. Its function is as follows. Cadherins are calcium-dependent cell adhesion proteins. They preferentially interact with themselves in a homophilic manner in connecting cells; cadherins may thus contribute to the sorting of heterogeneous cell types. This chain is EP-cadherin, found in Xenopus laevis (African clawed frog).